Reading from the N-terminus, the 442-residue chain is Pyruvate dehydrogenase complex protein X component, mitochondrial (442 aa).

The N-terminal 35 residues, 1-35, are a transit peptide targeting the mitochondrion; it reads MASLAAACRVSARLAARKLQHDAAVRGFRSSAAAL. Positions 37-113 constitute a Lipoyl-binding domain; that stretch reads AQNFMMPALS…QVGTRIAVVA (77 aa). An N6-lipoyllysine modification is found at K78. Residues 119–169 are disordered; the sequence is ITKLEIPPDEGPQQLKAAAPAPAPTPAPAPASPQPQFAAPTPSPPKASTKV. Residues 139–151 are compositionally biased toward pro residues; the sequence is APAPTPAPAPASP. Low complexity predominate over residues 152-169; sequence QPQFAAPTPSPPKASTKV. Residues 175-215 enclose the Peripheral subunit-binding (PSBD) domain; it reads PLLPSVHQLIKENGLDESAVSNITPTGPGGRILKGDVLAYL. The segment at 244-269 is disordered; sequence AKPVEPEKPQEEKASAPAPAPRAPEP. The segment covering 245–257 has biased composition (basic and acidic residues); it reads KPVEPEKPQEEKA. The interaction to the E2 core stretch occupies residues 317–336; that stretch reads PLPTNYQPTADELFDQVLGL.

Belongs to the 2-oxoacid dehydrogenase family. Eukaryotic pyruvate dehydrogenase (PDH) complexes are organized as a core consisting of the oligomeric dihydrolipoamide acetyl-transferase (E2), around which are arranged multiple copies of pyruvate dehydrogenase (E1), dihydrolipoamide dehydrogenase (E3) and protein X (E3BP) bound by non-covalent bonds. The Chaetomium thermophilum PDH complex contains 60 E2 units, 12 E3BP units, about 20 E1 units, and 12 or more E3 units. The units are organized in 1 E2 60-mer, 4 E3BP trimers, about 20 E1 tetramers, and a maximum of 12 E3 dimers. The E3BP trimers are bound inside the icosahedral core with tetrahedral symmetry.

Its subcellular location is the mitochondrion. Its function is as follows. The 10-megadalton pyruvate dehydrogenase complex contains multiple copies of three enzymatic components: pyruvate dehydrogenase (E1), dihydrolipoamide acetyltransferase (E2) and lipoamide dehydrogenase (E3) and catalyzes the overall oxidative decarboxylation of pyruvate to form acetyl-CoA and CO(2). E3BP is responsible for tethering E3 in proximity to the core, forming the entire metabolon, and the number of E3s is limited by the number of E3BPs. Within the complex, pyruvate and thiamine pyrophosphate (TPP or vitamin B1) are bound by pyruvate dehydrogenase E1 subunits alpha and beta and pyruvate is decarboxylated leading to the 2-carbon hydrohyethyl bound to TPP. The E2 component contains covalently-bound lipoyl cofactors and transfers the hydroxyethyl group from TPP to an oxidized form of covalently bound lipoamide, and the resulting acetyl group is then transferred to free coenzyme A to form acetyl-CoA and reduced dihydrolipoamide-E2. Finally, the flavoprotein dihydrolipoamide dehydrogenase (E3) re-oxidizes the lipoyl group of dihydrolipoamide-E2 to form lipoamide-E2 and NADH. A fourth subunit, E3BP, is responsible for tethering E3 in proximity to the core, forming the entire metabolon. This is Pyruvate dehydrogenase complex protein X component, mitochondrial from Chaetomium thermophilum (strain DSM 1495 / CBS 144.50 / IMI 039719) (Thermochaetoides thermophila).